The chain runs to 620 residues: MGVNAVHWFRKGLRLHDNPALRECIQGADTVRCVYILDPWFAGSSNVGINRWRFLLQCLEDLDANLRKLNSRLFVIRGQPADVFPRLFKEWNIAKLSIEYDSEPFGKERDAAIKKLASEAGVEVIVRISHTLYDLDKIIELNGGQPPLTYKRFQTLISRMEPLEMPVETITPEVMKKCTTPVSDDHDEKYGVPSLEELGFDTDGLPSAVWPGGETEALTRLERHLERKAWVANFERPRMNANSLLASPTGLSPYLRFGCLSCRLFYFKLTDLYKKVKKNSSPPLSLYGQLLWREFFYTAATNNPRFDKMEGNPICVQIPWDKNPEALAKWAEGRTGFPWIDAIMTQLRQEGWIHHLARHAVACFLTRGDLWISWEEGMKVFEELLLDADWSVNAGSWMWLSCSSFFQQFFHCYCPVGFGRRTDPNGDYIRRYLPVLRGFPAKYIYDPWNAPESIQKAAKCIIGVNYPKPMVNHAEASRLNIERMKQIYQQLSRYRGLGLLATVPSNPNGNGNGGLMGYSPGESISGCGSTGGAQLGAGDGHSVVQSCALGDSHTGTSGVQQQGYCQASSILHYAHGDNQQSHLLQAGRTALGTGISAGKRPNPEEETQSVGPKVQRQSTN.

The Photolyase/cryptochrome alpha/beta domain occupies 3–132; the sequence is VNAVHWFRKG…EVIVRISHTL (130 aa). 3 short sequence motifs (LIR) span residues 50-54, 82-87, and 151-156; these read NRWRF, DVFPRL, and KRFQTL. Ser-252 serves as a coordination point for FAD. Short sequence motifs (LIR) lie at residues 255 to 260, 271 to 276, 285 to 290, and 335 to 339; these read LRFGCL, DLYKKV, SLYGQL, and TGFPW. Gln-289 contributes to the FAD binding site. FAD is bound at residue His-355. The short motif at 379–384 is the LIR 8 element; the sequence is KVFEEL. 387–389 lines the FAD pocket; sequence DAD. 5 short sequence motifs (LIR) span residues 395-400, 411-416, 430-435, 486-491, and 492-497; these read GSWMWL, HCYCPV, RRYLPV, QIYQQL, and SRYRGL. The disordered stretch occupies residues 592–620; sequence GTGISAGKRPNPEEETQSVGPKVQRQSTN.

It belongs to the DNA photolyase class-1 family. In terms of assembly, component of the circadian core oscillator, which includes the CRY proteins, CLOCK or NPAS2, BMAL1 or BMAL2, CSNK1E, and the PER proteins. The cofactor is FAD. (6R)-5,10-methylene-5,6,7,8-tetrahydrofolate serves as cofactor. Expressed in the retina. High levels found in ganglion cells of the retina.

Its subcellular location is the cytoplasm. The protein localises to the nucleus. Functionally, transcriptional repressor which forms a core component of the circadian clock. The circadian clock, an internal time-keeping system, regulates various physiological processes through the generation of approximately 24 hour circadian rhythms in gene expression, which are translated into rhythms in metabolism and behavior. It is derived from the Latin roots 'circa' (about) and 'diem' (day) and acts as an important regulator of a wide array of physiological functions including metabolism, sleep, body temperature, blood pressure, endocrine, immune, cardiovascular, and renal function. Consists of two major components: the central clock, residing in the suprachiasmatic nucleus (SCN) of the brain, and the peripheral clocks that are present in nearly every tissue and organ system. Both the central and peripheral clocks can be reset by environmental cues, also known as Zeitgebers (German for 'timegivers'). The predominant Zeitgeber for the central clock is light, which is sensed by retina and signals directly to the SCN. The central clock entrains the peripheral clocks through neuronal and hormonal signals, body temperature and feeding-related cues, aligning all clocks with the external light/dark cycle. Circadian rhythms allow an organism to achieve temporal homeostasis with its environment at the molecular level by regulating gene expression to create a peak of protein expression once every 24 hours to control when a particular physiological process is most active with respect to the solar day. Transcription and translation of core clock components (CLOCK, NPAS2, BMAL1, BMAL2, PER1, PER2, PER3, CRY1 and CRY2) plays a critical role in rhythm generation, whereas delays imposed by post-translational modifications (PTMs) are important for determining the period (tau) of the rhythms (tau refers to the period of a rhythm and is the length, in time, of one complete cycle). A diurnal rhythm is synchronized with the day/night cycle, while the ultradian and infradian rhythms have a period shorter and longer than 24 hours, respectively. Disruptions in the circadian rhythms contribute to the pathology of cardiovascular diseases, cancer, metabolic syndromes and aging. A transcription/translation feedback loop (TTFL) forms the core of the molecular circadian clock mechanism. Transcription factors, CLOCK or NPAS2 and BMAL1 or BMAL2, form the positive limb of the feedback loop, act in the form of a heterodimer and activate the transcription of core clock genes and clock-controlled genes (involved in key metabolic processes), harboring E-box elements (5'-CACGTG-3') within their promoters. The core clock genes: PER1/2/3 and CRY1/2 which are transcriptional repressors form the negative limb of the feedback loop and interact with the CLOCK|NPAS2-BMAL1|BMAL2 heterodimer inhibiting its activity and thereby negatively regulating their own expression. This heterodimer also activates nuclear receptors NR1D1, NR1D2, RORA, RORB and RORG, which form a second feedback loop and which activate and repress BMAL1 transcription, respectively. CRY1 and CRY2 have redundant functions but also differential and selective contributions at least in defining the pace of the SCN circadian clock and its circadian transcriptional outputs. More potent transcriptional repressor in cerebellum and liver than CRY2, though more effective in lengthening the period of the SCN oscillator. On its side, CRY2 seems to play a critical role in tuning SCN circadian period by opposing the action of CRY1. With CRY2, is dispensable for circadian rhythm generation but necessary for the development of intercellular networks for rhythm synchrony. Capable of translocating circadian clock core proteins such as PER proteins to the nucleus. Interacts with CLOCK:BMAL1 independently of PER proteins and is found at CLOCK:BMAL1-bound sites, suggesting that CRY may act as a molecular gatekeeper to maintain CLOCK:BMAL1 in a poised and repressed state until the proper time for transcriptional activation. This is Cryptochrome-1 (CRY1) from Sylvia borin (Garden warbler).